A 354-amino-acid chain; its full sequence is Rhodopsin (354 aa).

Over 1 to 36 the chain is Extracellular; sequence MNGTEGPNFYIPMSNKTGVVRSPFDYPQYYLAEPWK. Residue Asn2 is glycosylated (N-linked (GlcNAc...) (hybrid) asparagine). N-linked (GlcNAc...) asparagine glycosylation occurs at Asn15. Residues 37-61 form a helical membrane-spanning segment; that stretch reads YSVLAAYMFLLILLGLPINFMTLYV. Topologically, residues 62–73 are cytoplasmic; sequence TIQHKKLRTPLN. Residues 74–96 form a helical membrane-spanning segment; that stretch reads YILLNLGVCNHFMVLCGFTITMY. At 97–110 the chain is on the extracellular side; the sequence is TSLHGYFVFGQTGC. A disulfide bridge connects residues Cys110 and Cys187. Residues 111 to 133 traverse the membrane as a helical segment; sequence YFEGFFATLGGEIALWSLVVLAI. Positions 134 to 136 match the 'Ionic lock' involved in activated form stabilization motif; sequence ERY. Topologically, residues 134-152 are cytoplasmic; sequence ERYIVVCKPMSNFRFGENH. Residues 153-173 form a helical membrane-spanning segment; sequence AMMGVAFTWIMALACAVPPLF. Residues 174-202 lie on the Extracellular side of the membrane; sequence GWSRYIPEGMQCSCGVDYYTLKPEVNNES. The chain crosses the membrane as a helical span at residues 203 to 224; the sequence is FVIYMFVVHFLIPLIIISFCYG. The Cytoplasmic segment spans residues 225–252; that stretch reads RLVCTVKEAAAQQQESATTQKAEKEVTR. Residues 253-274 traverse the membrane as a helical segment; it reads MVIIMVIFFLICWVPYAYVAFY. Residues 275 to 286 lie on the Extracellular side of the membrane; the sequence is IFTHQGSEFGPI. A helical membrane pass occupies residues 287-308; sequence FMTVPAFFAKSSAIYNPVIYIM. The residue at position 296 (Lys296) is an N6-(retinylidene)lysine. Residues 309 to 354 are Cytoplasmic-facing; the sequence is LNKQFRNCMITTLCCGKNPFGDDDASSAATSKTEATSVSTSQVSPA. 2 S-palmitoyl cysteine lipidation sites follow: Cys322 and Cys323. The tract at residues 332–354 is disordered; sequence DASSAATSKTEATSVSTSQVSPA. The span at 334 to 354 shows a compositional bias: low complexity; sequence SSAATSKTEATSVSTSQVSPA.

This sequence belongs to the G-protein coupled receptor 1 family. Opsin subfamily. In terms of processing, contains one covalently linked retinal chromophore. Upon light absorption, the covalently bound 11-cis-retinal is converted to all-trans-retinal. After hydrolysis of the Schiff base and release of the covalently bound all-trans-retinal, active rhodopsin is regenerated by binding of a fresh molecule of 11-cis-retinal. As to expression, detected in retina rod photoreceptor cell outer segments (at protein level). Detected in retina.

The protein resides in the membrane. It localises to the cell projection. Its subcellular location is the cilium. It is found in the photoreceptor outer segment. In terms of biological role, photoreceptor required for image-forming vision at low light intensity. Required for photoreceptor cell viability after birth. Light-induced isomerization of 11-cis to all-trans retinal triggers a conformational change that activates signaling via G-proteins. Subsequent receptor phosphorylation mediates displacement of the bound G-protein alpha subunit by arrestin and terminates signaling. The polypeptide is Rhodopsin (RHO) (Lithobates pipiens (Northern leopard frog)).